The sequence spans 882 residues: Valine--tRNA ligase (882 aa).

The short motif at 48-58 (PNVTGKLHLGH) is the 'HIGH' region element. Residues 524 to 528 (KMSKS) carry the 'KMSKS' region motif. Lys-527 contacts ATP. The stretch at 809–882 (LAELLDLDEE…KRLAELKAAR (74 aa)) forms a coiled coil. Positions 844–866 (GFTDRAPEKVVQEERDKQADYEQ) are disordered. Over residues 845–863 (FTDRAPEKVVQEERDKQAD) the composition is skewed to basic and acidic residues.

The protein belongs to the class-I aminoacyl-tRNA synthetase family. ValS type 1 subfamily. Monomer.

The protein localises to the cytoplasm. The enzyme catalyses tRNA(Val) + L-valine + ATP = L-valyl-tRNA(Val) + AMP + diphosphate. Catalyzes the attachment of valine to tRNA(Val). As ValRS can inadvertently accommodate and process structurally similar amino acids such as threonine, to avoid such errors, it has a 'posttransfer' editing activity that hydrolyzes mischarged Thr-tRNA(Val) in a tRNA-dependent manner. This chain is Valine--tRNA ligase, found in Latilactobacillus sakei subsp. sakei (strain 23K) (Lactobacillus sakei subsp. sakei).